A 150-amino-acid chain; its full sequence is uncharacterized protein (150 aa).

The Flavodoxin-like domain maps to Val-3–Ala-145.

The protein belongs to the flavodoxin family. MioC subfamily. FMN serves as cofactor.

Functionally, probable electron transporter. This is an uncharacterized protein from Pseudomonas aeruginosa (strain ATCC 15692 / DSM 22644 / CIP 104116 / JCM 14847 / LMG 12228 / 1C / PRS 101 / PAO1).